Here is a 379-residue protein sequence, read N- to C-terminus: UDP-4-amino-4-deoxy-L-arabinose--oxoglutarate aminotransferase (379 aa).

N6-(pyridoxal phosphate)lysine is present on Lys-182.

The protein belongs to the DegT/DnrJ/EryC1 family. ArnB subfamily. Homodimer. Pyridoxal 5'-phosphate serves as cofactor.

It catalyses the reaction UDP-4-amino-4-deoxy-beta-L-arabinose + 2-oxoglutarate = UDP-beta-L-threo-pentopyranos-4-ulose + L-glutamate. It functions in the pathway nucleotide-sugar biosynthesis; UDP-4-deoxy-4-formamido-beta-L-arabinose biosynthesis; UDP-4-deoxy-4-formamido-beta-L-arabinose from UDP-alpha-D-glucuronate: step 2/3. The protein operates within bacterial outer membrane biogenesis; lipopolysaccharide biosynthesis. Functionally, catalyzes the conversion of UDP-4-keto-arabinose (UDP-Ara4O) to UDP-4-amino-4-deoxy-L-arabinose (UDP-L-Ara4N). The modified arabinose is attached to lipid A and is required for resistance to polymyxin and cationic antimicrobial peptides. The sequence is that of UDP-4-amino-4-deoxy-L-arabinose--oxoglutarate aminotransferase from Shigella sonnei (strain Ss046).